We begin with the raw amino-acid sequence, 367 residues long: Germination protease (367 aa).

Positions methionine 1–aspartate 13 are excised as a propeptide. Positions lysine 267–threonine 287 are disordered.

Belongs to the peptidase A25 family. As to quaternary structure, homotetramer. In terms of processing, autoproteolytically processed. The inactive tetrameric zymogen termed p46 autoprocesses to a smaller form termed p41, which is active only during spore germination.

It catalyses the reaction Endopeptidase action with P4 Glu or Asp, P1 preferably Glu &gt; Asp, P1' hydrophobic and P2' Ala.. In terms of biological role, initiates the rapid degradation of small, acid-soluble proteins during spore germination. In Oceanobacillus iheyensis (strain DSM 14371 / CIP 107618 / JCM 11309 / KCTC 3954 / HTE831), this protein is Germination protease.